The following is a 297-amino-acid chain: Urease accessory protein UreD (297 aa).

The disordered stretch occupies residues 1–41 (MPQAADIATAPQRPSAPGDVVAAGQPPRARGRAHVSSKRRD).

This sequence belongs to the UreD family. UreD, UreF and UreG form a complex that acts as a GTP-hydrolysis-dependent molecular chaperone, activating the urease apoprotein by helping to assemble the nickel containing metallocenter of UreC. The UreE protein probably delivers the nickel.

It is found in the cytoplasm. Functionally, required for maturation of urease via the functional incorporation of the urease nickel metallocenter. In Ruegeria sp. (strain TM1040) (Silicibacter sp.), this protein is Urease accessory protein UreD.